The following is a 426-amino-acid chain: Glutamate-1-semialdehyde 2,1-aminomutase (426 aa).

The residue at position 265 (Lys265) is an N6-(pyridoxal phosphate)lysine.

It belongs to the class-III pyridoxal-phosphate-dependent aminotransferase family. HemL subfamily. As to quaternary structure, homodimer. It depends on pyridoxal 5'-phosphate as a cofactor.

It localises to the cytoplasm. It catalyses the reaction (S)-4-amino-5-oxopentanoate = 5-aminolevulinate. It functions in the pathway porphyrin-containing compound metabolism; protoporphyrin-IX biosynthesis; 5-aminolevulinate from L-glutamyl-tRNA(Glu): step 2/2. The protein is Glutamate-1-semialdehyde 2,1-aminomutase of Salmonella gallinarum (strain 287/91 / NCTC 13346).